A 119-amino-acid polypeptide reads, in one-letter code: NADH-quinone oxidoreductase subunit A (119 aa).

A run of 3 helical transmembrane segments spans residues 7–27 (FPVLIFIIFGVVLGIALMSIG), 63–83 (LIAILFILFDLETAFLFPWGV), and 88–108 (IGWPGFIAMGVFLLEFIVGFV).

This sequence belongs to the complex I subunit 3 family. As to quaternary structure, NDH-1 is composed of 14 different subunits. Subunits NuoA, H, J, K, L, M, N constitute the membrane sector of the complex.

It localises to the cell inner membrane. It catalyses the reaction a quinone + NADH + 5 H(+)(in) = a quinol + NAD(+) + 4 H(+)(out). NDH-1 shuttles electrons from NADH, via FMN and iron-sulfur (Fe-S) centers, to quinones in the respiratory chain. The immediate electron acceptor for the enzyme in this species is believed to be ubiquinone. Couples the redox reaction to proton translocation (for every two electrons transferred, four hydrogen ions are translocated across the cytoplasmic membrane), and thus conserves the redox energy in a proton gradient. This is NADH-quinone oxidoreductase subunit A from Cupriavidus pinatubonensis (strain JMP 134 / LMG 1197) (Cupriavidus necator (strain JMP 134)).